A 126-amino-acid chain; its full sequence is Nascent polypeptide-associated complex protein (126 aa).

In terms of domain architecture, NAC-A/B spans Pro-10–Lys-77.

The protein belongs to the NAC-alpha family. As to quaternary structure, homodimer. Interacts with the ribosome. Binds ribosomal RNA.

Its function is as follows. Contacts the emerging nascent chain on the ribosome. This Methanococcus maripaludis (strain C6 / ATCC BAA-1332) protein is Nascent polypeptide-associated complex protein.